The chain runs to 283 residues: Protoheme IX farnesyltransferase 1 (283 aa).

9 helical membrane-spanning segments follow: residues 14–34 (IALMIALTAITGYGAVATKVD), 35–55 (PVALLLLTLAMILGSAASAVF), 84–104 (LGFALAVVLMVAGMALANAAF), 107–127 (VVALHLFLGGFVYVAIYTVWL), 133–153 (TNIIIGGAAGSFAVLAGAAAV), 163–183 (VLALVLFLWTPSHFWSLAILL), 208–228 (ILANTVILVGASLLPWGLGLL), 231–251 (VYGFVAAVSGAVLLGFNVVLV), and 258–278 (WAGWNFAASMPYLLLLFIAVF).

The protein belongs to the UbiA prenyltransferase family. Protoheme IX farnesyltransferase subfamily.

The protein resides in the cell inner membrane. The catalysed reaction is heme b + (2E,6E)-farnesyl diphosphate + H2O = Fe(II)-heme o + diphosphate. It participates in porphyrin-containing compound metabolism; heme O biosynthesis; heme O from protoheme: step 1/1. In terms of biological role, converts heme B (protoheme IX) to heme O by substitution of the vinyl group on carbon 2 of heme B porphyrin ring with a hydroxyethyl farnesyl side group. In Paramagnetospirillum magneticum (strain ATCC 700264 / AMB-1) (Magnetospirillum magneticum), this protein is Protoheme IX farnesyltransferase 1.